The sequence spans 409 residues: Translation initiation factor 2 subunit gamma (409 aa).

The 197-residue stretch at 7 to 203 (QPEVNIGLVG…AIEREIPTPE (197 aa)) folds into the tr-type G domain. The tract at residues 16–23 (GHVDHGKT) is G1. Residues Asp-19, Thr-23, Gly-44, and Ser-46 each contribute to the Mg(2+) site. 19-24 (DHGKTT) provides a ligand contact to GTP. Residues 44–48 (GISIR) form a G2 region. Residues 90 to 93 (DAPG) are G3. Residues 146–149 (NKID) and 181–183 (SAQ) contribute to the GTP site. Residues 146 to 149 (NKID) form a G4 region. The tract at residues 181–183 (SAQ) is G5.

Belongs to the TRAFAC class translation factor GTPase superfamily. Classic translation factor GTPase family. EIF2G subfamily. As to quaternary structure, heterotrimer composed of an alpha, a beta and a gamma chain. Mg(2+) serves as cofactor.

It catalyses the reaction GTP + H2O = GDP + phosphate + H(+). EIF-2 functions in the early steps of protein synthesis by forming a ternary complex with GTP and initiator tRNA. This is Translation initiation factor 2 subunit gamma from Haloquadratum walsbyi (strain DSM 16790 / HBSQ001).